The following is a 4981-amino-acid chain: Protocadherin Fat 4 (4981 aa).

The N-terminal stretch at 1–42 (MNLAANRAPGRRRLPLPSPSLCQLLRVWGLLSLLPGSARVQA) is a signal peptide. Residues 43 to 4505 (AEQRQVFQVM…PDEISLPLWA (4463 aa)) are Extracellular-facing. Cadherin domains follow at residues 44–135 (EQRQ…APVF), 136–250 (PDPS…PPVF), 251–353 (GSSH…DPVV), 359–475 (PATS…PPVF), 476–582 (EQQV…KPVF), 584–689 (QPEG…SPVF), 690–793 (YPVQ…PPVF), 794–893 (SQAA…APHF), 894–996 (LQAV…PPVF), 997–1100 (DQIS…RPLF), 1101–1210 (NSTN…APKF), 1211–1315 (LKDF…TPSF), 1316–1420 (PKST…PPSF), 1421–1529 (PPGD…VPMF), 1529–1629 (FISQ…GPVF), 1630–1740 (TQTK…PPVF), 1741–1841 (PTDT…TPRF), 1842–1944 (SRPV…PPVF), 1945–2051 (SMSS…PPMF), 2051–2154 (FLSP…NPVF), 2155–2259 (AQAM…VPVF), 2260–2364 (ELSP…VPTF), 2365–2468 (ANNM…PPRF), 2469–2569 (QHHP…FPKV), 2570–2671 (RAKE…APTF), 2672–2775 (EEDP…APRF), 2775–2874 (FSQI…TPRF), 2875–2985 (SRPS…PPQF), 2986–3091 (LQNK…TPEF), 3092–3196 (SQNH…SPVF), 3197–3300 (VPDE…VPRF), 3301–3406 (VSKL…PPVF), 3407–3512 (SLST…GPVL), and 3511–3622 (VLTV…VEIF). Residues asparagine 84 and asparagine 237 are each glycosylated (N-linked (GlcNAc...) asparagine). Asparagine 393, asparagine 416, asparagine 435, asparagine 483, asparagine 551, asparagine 615, asparagine 676, asparagine 721, asparagine 825, asparagine 880, asparagine 948, asparagine 1085, asparagine 1101, asparagine 1104, asparagine 1225, asparagine 1296, asparagine 1389, and asparagine 1514 each carry an N-linked (GlcNAc...) asparagine glycan. Asparagine 1828, asparagine 1899, asparagine 1967, and asparagine 2119 each carry an N-linked (GlcNAc...) asparagine glycan. Asparagine 2387 and asparagine 2432 each carry an N-linked (GlcNAc...) asparagine glycan. Asparagine 2923, asparagine 2939, asparagine 3038, asparagine 3142, asparagine 3219, asparagine 3394, and asparagine 3479 each carry an N-linked (GlcNAc...) asparagine glycan. N-linked (GlcNAc...) asparagine glycans are attached at residues asparagine 3708 and asparagine 3760. In terms of domain architecture, EGF-like 1 spans 3804–3862 (DHDPCIHGPCQNGGSCLRRLAVGSALKIQESLPVIIVANEPLQPSQCKCVPGYAGSWCE). Disulfide bonds link cysteine 3808-cysteine 3819, cysteine 3813-cysteine 3850, cysteine 3852-cysteine 3861, cysteine 3868-cysteine 3879, cysteine 3873-cysteine 3888, cysteine 3890-cysteine 3899, cysteine 3906-cysteine 3917, cysteine 3911-cysteine 3926, cysteine 3928-cysteine 3937, cysteine 3944-cysteine 3955, cysteine 3949-cysteine 3964, and cysteine 3966-cysteine 3975. The region spanning 3864–3900 (DIDECLPAPCHNGGTCHNLVGGFSCSCPEGFTGRACE) is the EGF-like 2; calcium-binding domain. One can recognise an EGF-like 3; calcium-binding domain in the interval 3902–3938 (DINECLPSPCKHGAVCQNFPGGFNCVCKTGYTGKMCE). Positions 3940-3976 (SVNYCECNPCFNGGSCQSGVESYYCHCPFGVFGKHCE) constitute an EGF-like 4 domain. One can recognise a Laminin G-like 1 domain in the interval 3977-4161 (LNSYGFEELS…LAAQGILDQC (185 aa)). The N-linked (GlcNAc...) asparagine glycan is linked to asparagine 4019. 4 disulfides stabilise this stretch: cysteine 4135–cysteine 4161, cysteine 4168–cysteine 4179, cysteine 4173–cysteine 4188, and cysteine 4190–cysteine 4199. Residues 4164–4200 (LEGTCARNPCQHGGTCVDFWSWQQCQCMEGLTGKYCE) enclose the EGF-like 5 domain. The Laminin G-like 2 domain maps to 4219–4399 (YHMSQSEKRE…KTDPSVKIGC (181 aa)). Asparagine 4269 and asparagine 4314 each carry an N-linked (GlcNAc...) asparagine glycan. 4 cysteine pairs are disulfide-bonded: cysteine 4366–cysteine 4399, cysteine 4431–cysteine 4442, cysteine 4436–cysteine 4452, and cysteine 4454–cysteine 4463. The EGF-like 6 domain maps to 4427-4464 (PPGDCASHPCQNGGSCEPGLLSGYTCSCPESHTGRTCE). A helical transmembrane segment spans residues 4506 to 4526 (VPAIVGSCATALALLVLSLIL). Topologically, residues 4527–4981 (CNQCRGKMPK…AKDGEAEQYV (455 aa)) are cytoplasmic. 5 disordered regions span residues 4535 to 4585 (PKNP…PDII), 4677 to 4713 (PSSY…KPSA), 4753 to 4773 (RRSK…SRLK), 4796 to 4911 (RLNT…PAAA), and 4957 to 4981 (AAGN…EQYV). The segment covering 4677-4701 (PSSYGQGLRTSSLSHSACPTPNPLS) has biased composition (polar residues). The necessary and sufficient for interaction with MPDZ stretch occupies residues 4708–4797 (FSKPSAFYRN…GLSIEEVERL (90 aa)). Positions 4811–4823 (DHGRSSSEEDCRR) are enriched in basic and acidic residues. Position 4878 is a phosphoserine (serine 4878). Basic and acidic residues predominate over residues 4971 to 4981 (AAKDGEAEQYV).

In terms of assembly, heterophilic interaction with DCHS1; this interaction affects their respective protein levels. Interacts (via cytoplasmic domain) with MPDZ. Forms a complex with PALS1 and MPDZ. As to expression, widely expressed.

Its subcellular location is the membrane. Functionally, cadherins are cell-cell interaction molecules. FAT4 plays a role in the maintenance of planar cell polarity as well as in inhibition of YAP1-mediated neuroprogenitor cell proliferation and differentiation. The polypeptide is Protocadherin Fat 4 (Fat4) (Mus musculus (Mouse)).